A 445-amino-acid chain; its full sequence is uncharacterized protein (445 aa).

This is an uncharacterized protein from Acanthamoeba polyphaga mimivirus (APMV).